Here is a 57-residue protein sequence, read N- to C-terminus: Large ribosomal subunit protein bL32 (57 aa).

The protein belongs to the bacterial ribosomal protein bL32 family.

The protein is Large ribosomal subunit protein bL32 of Bacillus licheniformis (strain ATCC 14580 / DSM 13 / JCM 2505 / CCUG 7422 / NBRC 12200 / NCIMB 9375 / NCTC 10341 / NRRL NRS-1264 / Gibson 46).